A 350-amino-acid chain; its full sequence is MRRQDFSYELPDELIARRPTETRTGSRLLMLDGPSGELAHKQFPDLLNLVEEGDLMVFNNTRVIPARVFGQKASGGKLEILAERILDAHSILAHVRSSKAPKPGSIIILQDGTEVEMVARHEALFELRFPADTTALDVLENIGHMPLPPYIDREDEADDKERYQTVYGTQKGAVAAPTAGLHFDDVLLAKLKDKGVQQAFVTLHVGAGTFQPVRVDNIFEHHMHSEVMHVSQEVCDLIKATKAAGKRVIAVGTTSVRCLETAAQNGVVEPYQGDTDIFIYPGYQYKVVDALVTNFHLPESTLLMLVSAFAGYKHTMNAYQQAVAQCYRFFSYGDAMFITHNAEACKEEIK.

Belongs to the QueA family. As to quaternary structure, monomer.

The protein resides in the cytoplasm. The catalysed reaction is 7-aminomethyl-7-carbaguanosine(34) in tRNA + S-adenosyl-L-methionine = epoxyqueuosine(34) in tRNA + adenine + L-methionine + 2 H(+). It participates in tRNA modification; tRNA-queuosine biosynthesis. In terms of biological role, transfers and isomerizes the ribose moiety from AdoMet to the 7-aminomethyl group of 7-deazaguanine (preQ1-tRNA) to give epoxyqueuosine (oQ-tRNA). In Saccharophagus degradans (strain 2-40 / ATCC 43961 / DSM 17024), this protein is S-adenosylmethionine:tRNA ribosyltransferase-isomerase.